The chain runs to 299 residues: Ribosomal protein L11 methyltransferase (299 aa).

S-adenosyl-L-methionine contacts are provided by threonine 139, glycine 163, aspartate 185, and asparagine 232.

Belongs to the methyltransferase superfamily. PrmA family.

The protein resides in the cytoplasm. It carries out the reaction L-lysyl-[protein] + 3 S-adenosyl-L-methionine = N(6),N(6),N(6)-trimethyl-L-lysyl-[protein] + 3 S-adenosyl-L-homocysteine + 3 H(+). Its function is as follows. Methylates ribosomal protein L11. The sequence is that of Ribosomal protein L11 methyltransferase from Crocosphaera subtropica (strain ATCC 51142 / BH68) (Cyanothece sp. (strain ATCC 51142)).